The primary structure comprises 757 residues: Cap-specific mRNA (nucleoside-2'-O-)-methyltransferase 1 (757 aa).

The tract at residues 1 to 61 (MFQSNQYDEY…EDDEEEEDTP (61 aa)) is disordered. 2 stretches are compositionally biased toward acidic residues: residues 18–32 (EENE…NENE) and 40–59 (GDQD…EEED). The 47-residue stretch at 62-108 (KLSFGAKFLAKHGHIEGQGLGKEKDGRIDLIEVDRFQSTKGLGFAEN) folds into the G-patch domain. Positions 214-438 (IFINRAAVKM…ERYIICKNFL (225 aa)) constitute a RrmJ-type SAM-dependent 2'-O-MTase domain. 3 residues coordinate S-adenosyl-L-methionine: Gly-257, Glu-301, and Asp-352. The active-site Proton acceptor is Lys-392. Positions 538–548 (HKNRQKHHHNN) are enriched in basic residues. The disordered stretch occupies residues 538-670 (HKNRQKHHHN…NNNNNNNNKN (133 aa)). Over residues 549-569 (HSNNNNNNNNSNNNNNNNNQH) the composition is skewed to low complexity. The span at 570–581 (QHQHHQHQHHQN) shows a compositional bias: basic residues. The span at 597-668 (NNNINNNSNN…NNNNNNNNNN (72 aa)) shows a compositional bias: low complexity.

It carries out the reaction a 5'-end (N(7)-methyl 5'-triphosphoguanosine)-ribonucleoside in mRNA + S-adenosyl-L-methionine = a 5'-end (N(7)-methyl 5'-triphosphoguanosine)-(2'-O-methyl-ribonucleoside) in mRNA + S-adenosyl-L-homocysteine + H(+). Its function is as follows. S-adenosyl-L-methionine-dependent methyltransferase that mediates mRNA cap1 2'-O-ribose methylation to the 5'-cap structure of mRNAs. Methylates the ribose of the first nucleotide of a m(7)GpppG-capped mRNA to produce m(7)GpppNmp (cap1). Cap1 modification is linked to higher levels of translation. This is Cap-specific mRNA (nucleoside-2'-O-)-methyltransferase 1 from Dictyostelium discoideum (Social amoeba).